Here is a 208-residue protein sequence, read N- to C-terminus: Small ribosomal subunit protein uS4 (208 aa).

The S4 RNA-binding domain maps to 98 to 163 (TRLDNVVFRL…TPLFKEIVDG (66 aa)).

This sequence belongs to the universal ribosomal protein uS4 family. As to quaternary structure, part of the 30S ribosomal subunit. Contacts protein S5. The interaction surface between S4 and S5 is involved in control of translational fidelity.

Its function is as follows. One of the primary rRNA binding proteins, it binds directly to 16S rRNA where it nucleates assembly of the body of the 30S subunit. In terms of biological role, with S5 and S12 plays an important role in translational accuracy. The polypeptide is Small ribosomal subunit protein uS4 (Heliobacterium modesticaldum (strain ATCC 51547 / Ice1)).